Consider the following 938-residue polypeptide: Isoleucine--tRNA ligase (938 aa).

The 'HIGH' region signature appears at 58 to 68; the sequence is PYANGSIHIGH. Lysine 183 carries the post-translational modification N6-acetyllysine. Residue glutamate 561 participates in L-isoleucyl-5'-AMP binding. Positions 602 to 606 match the 'KMSKS' region motif; it reads KMSKS. Residue lysine 605 coordinates ATP. Positions 901, 904, 921, and 924 each coordinate Zn(2+).

It belongs to the class-I aminoacyl-tRNA synthetase family. IleS type 1 subfamily. As to quaternary structure, monomer. The cofactor is Zn(2+).

The protein localises to the cytoplasm. It carries out the reaction tRNA(Ile) + L-isoleucine + ATP = L-isoleucyl-tRNA(Ile) + AMP + diphosphate. Functionally, catalyzes the attachment of isoleucine to tRNA(Ile). As IleRS can inadvertently accommodate and process structurally similar amino acids such as valine, to avoid such errors it has two additional distinct tRNA(Ile)-dependent editing activities. One activity is designated as 'pretransfer' editing and involves the hydrolysis of activated Val-AMP. The other activity is designated 'posttransfer' editing and involves deacylation of mischarged Val-tRNA(Ile). The chain is Isoleucine--tRNA ligase from Escherichia coli (strain ATCC 8739 / DSM 1576 / NBRC 3972 / NCIMB 8545 / WDCM 00012 / Crooks).